The following is a 247-amino-acid chain: Eukaryotic translation initiation factor 6 (247 aa).

Phosphoserine; by CK1 is present on residues Ser174 and Ser175.

Belongs to the eIF-6 family. In terms of assembly, monomer. Associates with the 60S ribosomal subunit. In terms of processing, phosphorylation at Ser-174 and Ser-175 promotes nuclear export.

The protein localises to the cytoplasm. The protein resides in the nucleus. It is found in the nucleolus. Its function is as follows. Binds to the 60S ribosomal subunit and prevents its association with the 40S ribosomal subunit to form the 80S initiation complex in the cytoplasm. Is also involved in ribosome biogenesis. Associates with pre-60S subunits in the nucleus and is involved in its nuclear export. The sequence is that of Eukaryotic translation initiation factor 6 (tif6) from Talaromyces stipitatus (strain ATCC 10500 / CBS 375.48 / QM 6759 / NRRL 1006) (Penicillium stipitatum).